Reading from the N-terminus, the 178-residue chain is PRA1 family protein 2 (178 aa).

Topologically, residues 1–41 (MSEVRLPPLRALDDFVLGSARLVAPDPCDPQRWCHRVINNL) are cytoplasmic. The chain crosses the membrane as a helical span at residues 42-62 (LYYQTNYLICFGLGLALAGYV). Residues 63–64 (RP) lie on the Extracellular side of the membrane. The helical transmembrane segment at 65-85 (LHTLLSALVVAVALGMLVCAA) threads the bilayer. Over 86-96 (ENRAAVRRCRR) the chain is Cytoplasmic. A helical transmembrane segment spans residues 97 to 119 (SHPAACLAAVLAVGFLVLWAAGG). Over 120-122 (AGT) the chain is Extracellular. Residues 123 to 140 (FLLSIAGPVLLILVHASL) traverse the membrane as a helical segment. Over 141–178 (RLRNLKNKIENKIESIGLKRTPMGLLLEALGQEQEAGS) the chain is Cytoplasmic.

The protein belongs to the PRA1 family. Interacts with CCR5 and GDE1.

It localises to the endosome membrane. Functionally, may be involved in ER/Golgi transport and vesicular traffic. Plays a proapoptotic role in cerulenin-induced neuroblastoma apoptosis. The protein is PRA1 family protein 2 (PRAF2) of Bos taurus (Bovine).